The primary structure comprises 492 residues: Catalase (492 aa).

Catalysis depends on residues His65 and Asn138. Residue Tyr348 participates in heme binding.

This sequence belongs to the catalase family. Homotetramer. Requires heme as cofactor.

It localises to the cytoplasm. It is found in the cytosol. Its subcellular location is the peroxisome matrix. It carries out the reaction 2 H2O2 = O2 + 2 H2O. Catalyzes the degradation of hydrogen peroxide (H(2)O(2)) generated by peroxisomal oxidases to water and oxygen, thereby protecting cells from the toxic effects of hydrogen peroxide. The polypeptide is Catalase (Vigna radiata var. radiata (Mung bean)).